Here is a 192-residue protein sequence, read N- to C-terminus: MGKGCKVVVCGLLSVGKTAILEQLLYGNHTIGMEDCETMEDVYMASVETDRGVKEQLHLYDTRGLQEGVELPKHYFSFADGFVLVYSVNNLESFQRVELLKKEIDKFKDKKEVAIVVLGNKIDLSEQRQVDAEVAQQWAKSEKVRLWEVTVTDRKTLIEPFTLLASKLSQPQSKSSFPLPGRKNKGNSNSEN.

Residue 11-18 participates in GTP binding; the sequence is GLLSVGKT. The short motif at 35 to 43 is the Effector region element; sequence DCETMEDVY. Residues 58–93 are interactions with NFKBIA and NFKBIB; that stretch reads HLYDTRGLQEGVELPKHYFSFADGFVLVYSVNNLES. GTP is bound by residues 61 to 65 and 120 to 123; these read DTRGL and NKID. The interval 168 to 192 is disordered; the sequence is LSQPQSKSSFPLPGRKNKGNSNSEN.

It belongs to the small GTPase superfamily. Ras family. KappaB-Ras subfamily. As to quaternary structure, interacts with both NF-kappa-B inhibitor alpha (NFKBIA) and beta (NFKBIB) in vitro. However, it probably only interacts with NFKBIB in vivo. Forms a complex with NFKBIB and NF-kappa-B heterodimer (p50/NFKB1 and p65/RELA). Also interacts with c-Rel (REL). As to expression, widely expressed.

It is found in the cytoplasm. Its function is as follows. Atypical Ras-like protein that acts as a potent regulator of NF-kappa-B activity by preventing the degradation of NF-kappa-B inhibitor beta (NFKBIB) by most signals, explaining why NFKBIB is more resistant to degradation. May act by blocking phosphorylation of NFKBIB and mediating cytoplasmic retention of p65/RELA NF-kappa-B subunit. It is unclear whether it acts as a GTPase. Both GTP- and GDP-bound forms block phosphorylation of NFKBIB. The protein is NF-kappa-B inhibitor-interacting Ras-like protein 1 (NKIRAS1) of Homo sapiens (Human).